The chain runs to 142 residues: MVKLSEDQEHYIKGVWKDVDHKQITAKALERVFVVYPWTTRLFSKLQGLFSANDIGVQQHADKVQRALGEAIDDLKKVEINFQNLSGKHQEIGVDTQNFKLLGQTFMVELALHYKKTFRPKEHAAAYKFFRLVAEALSSNYH.

A Globin domain is found at 3-142; sequence KLSEDQEHYI…VAEALSSNYH (140 aa). Heme b contacts are provided by histidine 60 and histidine 89.

Belongs to the globin family. In terms of assembly, heterotetramer of two alpha chains and two beta chains. Red blood cells.

Involved in oxygen transport from gills to the various peripheral tissues. This is Hemoglobin subunit beta (HBB) from Hemitrygon akajei (Red stingray).